Here is a 2946-residue protein sequence, read N- to C-terminus: Neurobeachin (2946 aa).

Positions 971–995 (ENIKKGKKGNVSTISGLSSQTTGAK) are disordered. Residues 980–993 (NVSTISGLSSQTTG) are compositionally biased toward polar residues. A phosphoserine mark is found at serine 1011 and serine 1014. A WD 1 repeat occupies 1326–1368 (TTMFRIPEFKWSPMHQRLLTDLLFALETDVHVWRSHSTKSVMD). Disordered regions lie at residues 1490-1531 (QRDR…LSPI), 1651-1675 (TIKE…HTDS), 1711-1731 (VKKS…PATS), and 1841-1860 (GAVD…VNGA). Residues 1497–1517 (SSHGSSKPQEVPQSVTATAAS) show a composition bias toward polar residues. A Phosphoserine modification is found at serine 1529. A phosphoserine mark is found at serine 1714 and serine 1717. Polar residues predominate over residues 1716 to 1731 (ESLTENPSETLKPATS). Positions 1845–1855 (SGSSSSSSSSS) are enriched in low complexity. A Phosphoserine modification is found at serine 2138. The 109-residue stretch at 2147-2255 (NLAGPVVLST…TVKKVVYSLP (109 aa)) folds into the BEACH-type PH domain. In terms of domain architecture, BEACH spans 2274–2563 (ATPRQLYKSS…QLLIEPHPPR (290 aa)). Serine 2575 bears the Phosphoserine mark. WD repeat units follow at residues 2718–2761 (GHWD…HIIG), 2778–2818 (GHDH…RALE), 2860–2899 (EIND…QLYI), and 2902–2941 (GCDA…WHYE).

The protein belongs to the WD repeat neurobeachin family. In terms of assembly, interacts with RII subunit of PKA. As to expression, predominant in many brain structures. Also expressed at medium levels in spleen, thymus, prostate, testis and ovary. Low level expression is seen in heart, kidney, pancreas, skeletal muscle and intestine.

The protein resides in the cytoplasm. It is found in the membrane. Functionally, binds to type II regulatory subunits of protein kinase A and anchors/targets them to the membrane. May anchor the kinase to cytoskeletal and/or organelle-associated proteins. The chain is Neurobeachin from Homo sapiens (Human).